A 97-amino-acid chain; its full sequence is Large ribosomal subunit protein uL23 (97 aa).

The protein belongs to the universal ribosomal protein uL23 family. As to quaternary structure, part of the 50S ribosomal subunit. Contacts protein L29, and trigger factor when it is bound to the ribosome.

In terms of biological role, one of the early assembly proteins it binds 23S rRNA. One of the proteins that surrounds the polypeptide exit tunnel on the outside of the ribosome. Forms the main docking site for trigger factor binding to the ribosome. The polypeptide is Large ribosomal subunit protein uL23 (Clostridium perfringens (strain SM101 / Type A)).